We begin with the raw amino-acid sequence, 852 residues long: Leucine--tRNA ligase (852 aa).

The 'HIGH' region motif lies at 41–51 (PYPSGRIHIGH). The 'KMSKS' region motif lies at 623 to 627 (KMSKS). ATP is bound at residue lysine 626.

This sequence belongs to the class-I aminoacyl-tRNA synthetase family.

It is found in the cytoplasm. It carries out the reaction tRNA(Leu) + L-leucine + ATP = L-leucyl-tRNA(Leu) + AMP + diphosphate. The chain is Leucine--tRNA ligase from Ruegeria pomeroyi (strain ATCC 700808 / DSM 15171 / DSS-3) (Silicibacter pomeroyi).